A 356-amino-acid chain; its full sequence is Cyanuric acid amidohydrolase (356 aa).

The RU A stretch occupies residues 1–99 (MPIAKVHRIA…FLVFERAEGN (99 aa)). Substrate-binding positions include arginine 52 and 79-80 (SG). The segment at 106-243 (ALAIGRAHTP…HEIVVLGMSE (138 aa)) is RU B. The active site involves lysine 156. Substrate-binding positions include arginine 188 and 226–227 (SS). Serine 226 functions as the Nucleophile in the catalytic mechanism. Residues 249–356 (LAIAHGVMAD…VAVIAARTMG (108 aa)) are RU C. Glutamate 287 provides a ligand contact to Mg(2+). Substrate contacts are provided by residues arginine 314 and 333–334 (SG). 5 residues coordinate Mg(2+): glycine 336, glutamine 339, glycine 340, proline 341, and glycine 344.

The protein belongs to the cyclic amide hydrolase (CyAH) family. As to quaternary structure, homotetramer.

The enzyme catalyses cyanurate + H2O = 1-carboxybiuret + H(+). Its pathway is xenobiotic degradation; atrazine degradation; biuret from cyanurate: step 1/1. With respect to regulation, inhibited by barbituric acid. In terms of biological role, responsible for the hydrolysis of cyanuric acid, an intermediate formed during catabolism of s-triazine based compounds in herbicides such as atrazine and polymers such as melamine. Catalyzes the hydrolytic opening of the s-triazine ring of cyanuric acid (2,4,6-trihydroxy-s-triazine) to yield carbon dioxide and carboxybiuret, which spontaneously decarboxylates to biuret. In Azorhizobium caulinodans (strain ATCC 43989 / DSM 5975 / JCM 20966 / LMG 6465 / NBRC 14845 / NCIMB 13405 / ORS 571), this protein is Cyanuric acid amidohydrolase.